The primary structure comprises 309 residues: Probable manganese-dependent inorganic pyrophosphatase (309 aa).

Mn(2+) contacts are provided by histidine 9, aspartate 13, aspartate 15, aspartate 75, histidine 97, and aspartate 149.

Belongs to the PPase class C family. Requires Mn(2+) as cofactor.

The protein resides in the cytoplasm. It carries out the reaction diphosphate + H2O = 2 phosphate + H(+). This chain is Probable manganese-dependent inorganic pyrophosphatase, found in Bacillus licheniformis (strain ATCC 14580 / DSM 13 / JCM 2505 / CCUG 7422 / NBRC 12200 / NCIMB 9375 / NCTC 10341 / NRRL NRS-1264 / Gibson 46).